The primary structure comprises 251 residues: tRNA (guanine-N(7)-)-methyltransferase (251 aa).

S-adenosyl-L-methionine contacts are provided by residues Gly72, 95–96 (EI), 132–133 (NA), and Leu152. Asp155 is an active-site residue. 230 to 232 (SEE) is a binding site for S-adenosyl-L-methionine.

This sequence belongs to the class I-like SAM-binding methyltransferase superfamily. TrmB family.

It localises to the nucleus. The enzyme catalyses guanosine(46) in tRNA + S-adenosyl-L-methionine = N(7)-methylguanosine(46) in tRNA + S-adenosyl-L-homocysteine. Its pathway is tRNA modification; N(7)-methylguanine-tRNA biosynthesis. Functionally, catalyzes the formation of N(7)-methylguanine at position 46 (m7G46) in tRNA. This chain is tRNA (guanine-N(7)-)-methyltransferase, found in Drosophila willistoni (Fruit fly).